Reading from the N-terminus, the 378-residue chain is Apoptosis-inducing factor 1 (378 aa).

Residues 7 to 25 form a helical membrane-spanning segment; it reads NIVVVGAGVFGVSVANHLY. FAD contacts are provided by residues 12 to 16, Arg51, Lys56, and Asp283; that span reads GAGVF.

The protein belongs to the FAD-dependent oxidoreductase family. FAD is required as a cofactor.

It localises to the mitochondrion outer membrane. The protein resides in the nucleus. Putative FAD-dependent oxidoreductase involved in the resistance to cercosporin and other singlet oxygen-generating photosensitizers. Translocates from mitochondria to the nucleus under apoptotic conditions, where it degrades DNA and induces apoptosis. This is Apoptosis-inducing factor 1 (AIF1) from Saccharomyces cerevisiae (strain ATCC 204508 / S288c) (Baker's yeast).